A 71-amino-acid chain; its full sequence is Small, acid-soluble spore protein I (71 aa).

It belongs to the SspI family.

The protein resides in the spore core. The sequence is that of Small, acid-soluble spore protein I from Geobacillus sp. (strain WCH70).